Here is a 211-residue protein sequence, read N- to C-terminus: Cytochrome c biogenesis ATP-binding export protein CcmA (211 aa).

The ABC transporter domain maps to 1-211; it reads MAIHNLACVR…RMAEATSCFG (211 aa). Residue 33 to 40 coordinates ATP; that stretch reads GSNGAGKT.

Belongs to the ABC transporter superfamily. CcmA exporter (TC 3.A.1.107) family. In terms of assembly, the complex is composed of two ATP-binding proteins (CcmA) and two transmembrane proteins (CcmB).

It localises to the cell inner membrane. The enzyme catalyses heme b(in) + ATP + H2O = heme b(out) + ADP + phosphate + H(+). Its function is as follows. Part of the ABC transporter complex CcmAB involved in the biogenesis of c-type cytochromes; once thought to export heme, this seems not to be the case, but its exact role is uncertain. Responsible for energy coupling to the transport system. In Sodalis glossinidius (strain morsitans), this protein is Cytochrome c biogenesis ATP-binding export protein CcmA.